Consider the following 342-residue polypeptide: Ferrochelatase (342 aa).

2 residues coordinate Fe cation: His188 and Glu268.

The protein belongs to the ferrochelatase family.

The protein localises to the cytoplasm. It carries out the reaction heme b + 2 H(+) = protoporphyrin IX + Fe(2+). The protein operates within porphyrin-containing compound metabolism; protoheme biosynthesis; protoheme from protoporphyrin-IX: step 1/1. Functionally, catalyzes the ferrous insertion into protoporphyrin IX. The polypeptide is Ferrochelatase (Rickettsia conorii (strain ATCC VR-613 / Malish 7)).